The primary structure comprises 255 residues: Imidazole glycerol phosphate synthase subunit HisF (255 aa).

Residues Asp-11 and Asp-130 contribute to the active site.

The protein belongs to the HisA/HisF family. Heterodimer of HisH and HisF.

It is found in the cytoplasm. It catalyses the reaction 5-[(5-phospho-1-deoxy-D-ribulos-1-ylimino)methylamino]-1-(5-phospho-beta-D-ribosyl)imidazole-4-carboxamide + L-glutamine = D-erythro-1-(imidazol-4-yl)glycerol 3-phosphate + 5-amino-1-(5-phospho-beta-D-ribosyl)imidazole-4-carboxamide + L-glutamate + H(+). It functions in the pathway amino-acid biosynthesis; L-histidine biosynthesis; L-histidine from 5-phospho-alpha-D-ribose 1-diphosphate: step 5/9. Its function is as follows. IGPS catalyzes the conversion of PRFAR and glutamine to IGP, AICAR and glutamate. The HisF subunit catalyzes the cyclization activity that produces IGP and AICAR from PRFAR using the ammonia provided by the HisH subunit. The protein is Imidazole glycerol phosphate synthase subunit HisF of Akkermansia muciniphila (strain ATCC BAA-835 / DSM 22959 / JCM 33894 / BCRC 81048 / CCUG 64013 / CIP 107961 / Muc).